Reading from the N-terminus, the 309-residue chain is Probable (S)-ureidoglycine aminohydrolase (309 aa).

The first 22 residues, M1–A22, serve as a signal peptide directing secretion. Residues E245, H247, H251, and Q285 each coordinate Mn(2+). E245 is a binding site for substrate. Substrate-binding residues include Q285, Y297, and K301.

Belongs to the UGHY family. Homooctamer. It depends on Mn(2+) as a cofactor.

The protein resides in the endoplasmic reticulum. The enzyme catalyses (S)-2-ureidoglycine + H2O = (S)-ureidoglycolate + NH4(+). In terms of biological role, involved in the catabolism of purine nucleotides. The sequential activity of AAH, UGLYAH and UAH allows a complete purine breakdown without the intermediate generation of urea. The sequence is that of Probable (S)-ureidoglycine aminohydrolase (UGLYAH) from Oryza sativa subsp. japonica (Rice).